The following is a 278-amino-acid chain: Phosphatidylglycerol--prolipoprotein diacylglyceryl transferase (278 aa).

Helical transmembrane passes span leucine 17 to glycine 37, alanine 57 to tyrosine 77, isoleucine 89 to alanine 109, and leucine 119 to glycine 139. An a 1,2-diacyl-sn-glycero-3-phospho-(1'-sn-glycerol)-binding site is contributed by arginine 140. 3 consecutive transmembrane segments (helical) span residues glutamine 174 to alanine 194, glycine 200 to phenylalanine 220, and leucine 233 to leucine 253.

It belongs to the Lgt family.

It localises to the cell inner membrane. The enzyme catalyses L-cysteinyl-[prolipoprotein] + a 1,2-diacyl-sn-glycero-3-phospho-(1'-sn-glycerol) = an S-1,2-diacyl-sn-glyceryl-L-cysteinyl-[prolipoprotein] + sn-glycerol 1-phosphate + H(+). The protein operates within protein modification; lipoprotein biosynthesis (diacylglyceryl transfer). Catalyzes the transfer of the diacylglyceryl group from phosphatidylglycerol to the sulfhydryl group of the N-terminal cysteine of a prolipoprotein, the first step in the formation of mature lipoproteins. This Nitrosomonas europaea (strain ATCC 19718 / CIP 103999 / KCTC 2705 / NBRC 14298) protein is Phosphatidylglycerol--prolipoprotein diacylglyceryl transferase.